An 82-amino-acid polypeptide reads, in one-letter code: uncharacterized protein (82 aa).

This is an uncharacterized protein from Bacillus subtilis (strain 168).